The primary structure comprises 1277 residues: NPC intracellular cholesterol transporter 1 (1277 aa).

The first 22 residues, 1-22 (MGAHHPALGLLLLLLCPAQVFS), serve as a signal peptide directing secretion. At 23 to 269 (QSCVWYGECG…WRIWGLDAMY (247 aa)) the chain is on the lumenal side. 9 cysteine pairs are disulfide-bonded: Cys-25/Cys-74, Cys-31/Cys-42, Cys-63/Cys-109, Cys-75/Cys-113, Cys-97/Cys-238, Cys-100/Cys-160, Cys-177/Cys-184, Cys-227/Cys-243, and Cys-240/Cys-247. Asn-41 lines the cholesterol pocket. An N-linked (GlcNAc...) asparagine glycan is attached at Asn-70. Gln-79 contributes to the cholesterol binding site. N-linked (GlcNAc...) asparagine glycosylation is found at Asn-122 and Asn-137. An important for cholesterol binding and cholesterol transfer from NPC1 to liposomes region spans residues 175–205 (LLCGRDARACNATNWIEYMFNKDNGQAPFTI). 3 N-linked (GlcNAc...) asparagine glycosylation sites follow: Asn-185, Asn-222, and Asn-228. Residues 270–290 (VIMWVTYVAFLFVFFGALLAV) form a helical membrane-spanning segment. Topologically, residues 291–350 (WCHRRRYFVSEYTPIDSNIAFSVNSSDKGEASCCDPLGAAFDDCLRRMFTKWGAFCVRNP) are cytoplasmic. Residues 351–371 (TCIIFFSLAFITVCSSGLVFV) traverse the membrane as a helical segment. The Lumenal segment spans residues 372-621 (QVTTNPVELW…ELNRESNSDV (250 aa)). N-linked (GlcNAc...) asparagine glycosylation is found at Asn-414, Asn-459, Asn-478, and Asn-524. Intrachain disulfides connect Cys-468–Cys-479 and Cys-516–Cys-533. One can recognise an SSD domain in the interval 620 to 785 (DVFTVIISYV…ITCFVSLLGL (166 aa)). A helical transmembrane segment spans residues 622-642 (FTVIISYVVMFLYISLALGHI). At 643-653 (QSCSRLLVDSK) the chain is on the cytoplasmic side. A helical transmembrane segment spans residues 654 to 674 (ISLGIAGILIVLSSVACSLGI). Residues 675–683 (FSYMGMPLT) are Lumenal-facing. The helical transmembrane segment at 684–704 (LIVIEVIPFLVLAVGVDNIFI) threads the bilayer. Topologically, residues 705–730 (LVQTYQRDERLQEETLDQQLGRILGE) are cytoplasmic. Residues 731–751 (VAPTMFLSSFSETSAFFFGAL) form a helical membrane-spanning segment. Residues 752–759 (SSMPAVHT) are Lumenal-facing. Residues 760-780 (FSLFAGMAVLIDFLLQITCFV) traverse the membrane as a helical segment. Over 781-832 (SLLGLDIKRQEKNHLDILCCVRGADDGQGSHASESYLFRFFKNYFAPLLLKD) the chain is Cytoplasmic. A helical transmembrane segment spans residues 833–853 (WLRPIVVAVFVGVLSFSVAVV). The Lumenal segment spans residues 854-1097 (NKVDIGLDQS…EQYLTIIDDT (244 aa)). N-linked (GlcNAc...) asparagine glycosylation is found at Asn-868 and Asn-898. Cys-909 and Cys-914 are oxidised to a cystine. Residues Asn-916, Asn-961, Asn-968, and Asn-1063 are each glycosylated (N-linked (GlcNAc...) asparagine). 3 disulfide bridges follow: Cys-956–Cys-1011, Cys-957–Cys-979, and Cys-967–Cys-976. Residues 1098-1118 (IFNLSVSLGSIFLVTLVVLGC) form a helical membrane-spanning segment. The Cytoplasmic segment spans residues 1119–1123 (ELWSA). Residues 1124–1144 (VIMCITIAMILVNMFGVMWLW) form a helical membrane-spanning segment. Gly-1145 is a topological domain (lumenal). A helical transmembrane segment spans residues 1146-1166 (ISLNAVSLVNLVMSCGISVEF). Over 1167–1194 (CSHITRAFTMSTKGSRVSRAEEALAHMG) the chain is Cytoplasmic. A helical transmembrane segment spans residues 1195-1215 (SSVFSGITLTKFGGIVVLAFA). Residues 1216 to 1226 (KSQIFEIFYFR) lie on the Lumenal side of the membrane. The helical transmembrane segment at 1227-1247 (MYLAMVLLGATHGLIFLPVLL) threads the bilayer. The Cytoplasmic portion of the chain corresponds to 1248–1277 (SYIGPSVNKAKRHTTYERYRGTERERLLNF). Residues 1274–1277 (LLNF) are required for location in lysosomes. The Di-leucine motif motif lies at 1274–1277 (LLNF).

This sequence belongs to the patched family. Interacts (via the second lumenal domain) with NPC2. Interacts with TMEM97; the interaction may decrease NPC1 availability to the cell. Interacts with TIM1. Interacts with SLC38A9; this interaction inhibits cholesterol-mediated mTORC1 activation via its sterol transport activity. Post-translationally, N-glycosylated. As to expression, detected in liver (at protein level). Ubiquitous. Detected in adult heart, spleen, lung, liver, skeletal muscle, kidney, testis.

The protein resides in the late endosome membrane. The protein localises to the lysosome membrane. The enzyme catalyses cholesterol(in) = cholesterol(out). In terms of biological role, intracellular cholesterol transporter which acts in concert with NPC2 and plays an important role in the egress of cholesterol from the endosomal/lysosomal compartment. Unesterified cholesterol that has been released from LDLs in the lumen of the late endosomes/lysosomes is transferred by NPC2 to the cholesterol-binding pocket in the N-terminal domain of NPC1. Cholesterol binds to NPC1 with the hydroxyl group buried in the binding pocket. May play a role in vesicular trafficking in glia, a process that may be crucial for maintaining the structural and functional integrity of nerve terminals. Inhibits cholesterol-mediated mTORC1 activation throught its interaction with SLC38A9. This is NPC intracellular cholesterol transporter 1 from Mus musculus (Mouse).